Here is a 168-residue protein sequence, read N- to C-terminus: Transcriptional repressor NrdR (168 aa).

The tract at residues 1 to 21 is disordered; sequence MQCPACRHTDSRVLESRSSES. A zinc finger spans residues 3–34; the sequence is CPACRHTDSRVLESRSSESGRSVRRRRECLSC. Positions 7 to 20 are enriched in basic and acidic residues; the sequence is RHTDSRVLESRSSE. The ATP-cone domain maps to 49 to 139; sequence ISVIKRNGDR…VYRQFRGVRD (91 aa).

The protein belongs to the NrdR family. Zn(2+) serves as cofactor.

In terms of biological role, negatively regulates transcription of bacterial ribonucleotide reductase nrd genes and operons by binding to NrdR-boxes. The polypeptide is Transcriptional repressor NrdR (Synechococcus elongatus (strain ATCC 33912 / PCC 7942 / FACHB-805) (Anacystis nidulans R2)).